The chain runs to 1059 residues: Zinc finger protein 865 (1059 aa).

3 disordered regions span residues 1–24 (MEAN…EDGV), 58–142 (LPCA…DAAF), and 161–206 (NLKR…CDPT). The segment covering 8 to 21 (SGAGGGGSSGIGGE) has biased composition (gly residues). Residues 61-78 (APGPPPQPPPQPPPPQYD) are compositionally biased toward pro residues. Positions 93-119 (SSSSSSSSSSSSSSSSSSSSSSSSSQA) are enriched in low complexity. Pro residues-rich tracts occupy residues 124–137 (PPLP…PPPL) and 183–198 (APGP…PGPP). C2H2-type zinc fingers lie at residues 224–246 (FPCG…MLVH) and 252–274 (YECG…RRCH). A disordered region spans residues 275-342 (KDVPPAAGGP…PAGVGVPPPA (68 aa)). Positions 281–296 (AGGPPQPGPHLPPLGL) are enriched in pro residues. Composition is skewed to low complexity over residues 297–316 (PAPA…SSGP) and 324–337 (APSA…AGVG). 4 C2H2-type zinc fingers span residues 350-372 (FACP…QIIH), 378-400 (FSCS…VKTH), 407-429 (LPCG…QAAH), and 441-463 (YPCD…KAAH). A disordered region spans residues 461 to 503 (AAHAPPAAAAEAPKDGAASAPQPPPTFPPGPYLLPPDPPTTDS). The segment covering 463–480 (HAPPAAAAEAPKDGAASA) has biased composition (low complexity). Positions 481 to 499 (PQPPPTFPPGPYLLPPDPP) are enriched in pro residues. C2H2-type zinc fingers lie at residues 550 to 572 (FCCG…ERIH), 578 to 600 (HQCP…HVVH), 606 to 628 (YKCE…RQVH), 669 to 691 (YACS…KEVH), and 697 to 719 (YGCD…KLVH). Residues 726 to 747 (LLPPAPGGLQPPDGSSGTDAAS) form a disordered region. C2H2-type zinc fingers lie at residues 792-814 (FSCA…KYVH), 820-842 (LGCG…RRSH), 848-870 (FRCP…QRCH), 876-898 (YRCG…RVVH), 904-926 (FKCG…RRLH), 932-954 (QRCS…QRLH), 960-982 (YRCE…QRAH), 989-1011 (LRCP…LAAH), and 1017-1039 (FRCS…RLAH). Residue lysine 802 forms a Glycyl lysine isopeptide (Lys-Gly) (interchain with G-Cter in SUMO2) linkage. Lysine 1040 participates in a covalent cross-link: Glycyl lysine isopeptide (Lys-Gly) (interchain with G-Cter in SUMO2).

Belongs to the krueppel C2H2-type zinc-finger protein family.

The protein localises to the nucleus. May be involved in transcriptional regulation. In Homo sapiens (Human), this protein is Zinc finger protein 865 (ZNF865).